A 424-amino-acid chain; its full sequence is MDDRLSSQLEHYASQVTASATLIIRHLKSLKDEPSTLPSQTSVPTAVGTAQLRLAEAAFQLLHFTRDPGNVLTQLTVDLQVISAVRWLLHFEIFSLVPLEGSISYHELSSVANVPENLLRSHIRLAMTCHLFQESGPIGMVAHSPVSRQLASDPSLVSWGQYFANSVFPTATKNVNATAAWPGSKALNETAHNLAFNHHGSFFDYVSQDPARTVEFANSMKAVSTTSLFDTCHLCKSFDWSSLGDGVVVDMGGSTGHVSIALAESFPSLRFVVQDLPDVVSNSIRQLEERQLPLSVTTRIQFQGHSLLHMQPVKGAAVYLLRQILHDWPDREAVQILRSIVPALGPSSKIFIADIVLPEAGSIPATEEQVMRCNDLLLHQFTNTLERTLEDWQAIVSRVSDNLRIQHVYRDPGSILSLLVIETV.

Asp-275 is a binding site for S-adenosyl-L-methionine. Residue His-326 is the Proton acceptor of the active site.

Belongs to the class I-like SAM-binding methyltransferase superfamily. Cation-independent O-methyltransferase family.

It functions in the pathway secondary metabolite biosynthesis. In terms of biological role, O-methyltransferase; part of the gene cluster that mediates the biosynthesis of aurasperone B, a dimeric gamma-naphthopyrone. The first step in the biosynthesis of aurasperone B is the production of gamma-naphthopyrone precursor YWA1 by the non-reducing polyketide synthase albA, via condensation of one acetyl-CoA starter unit with 6 malonyl-CoA units. YWA1 is then methylated by aunE at position C-6 to yield foncesin which is further methylated at position C-8 by aunD to produce fonsecin B. A key enzyme in the biosynthetic pathway is the cytochrome P450 monooxygenase aunB which catalyzes the oxidative dimerization of fonsecin B to aurasperone B. AunB also catalyzes the oxidative dimerization of rubrofusarin B into aurasperone A. The protein is O-methyltransferase aunD of Aspergillus niger (strain ATCC MYA-4892 / CBS 513.88 / FGSC A1513).